Consider the following 241-residue polypeptide: Small ribosomal subunit protein uS2 (241 aa).

It belongs to the universal ribosomal protein uS2 family.

In Escherichia coli O127:H6 (strain E2348/69 / EPEC), this protein is Small ribosomal subunit protein uS2.